A 141-amino-acid polypeptide reads, in one-letter code: Large ribosomal subunit protein uL11 (141 aa).

Belongs to the universal ribosomal protein uL11 family. In terms of assembly, part of the ribosomal stalk of the 50S ribosomal subunit. Interacts with L10 and the large rRNA to form the base of the stalk. L10 forms an elongated spine to which L12 dimers bind in a sequential fashion forming a multimeric L10(L12)X complex. In terms of processing, one or more lysine residues are methylated.

Functionally, forms part of the ribosomal stalk which helps the ribosome interact with GTP-bound translation factors. The protein is Large ribosomal subunit protein uL11 of Chlamydia felis (strain Fe/C-56) (Chlamydophila felis).